A 292-amino-acid chain; its full sequence is uncharacterized protein (292 aa).

The N-terminal stretch at 1–21 is a signal peptide; the sequence is MNSNSNKKRDPARFPAGVAQG. The segment at 1-30 is disordered; that stretch reads MNSNSNKKRDPARFPAGVAQGCSTTRAGDL.

This is an uncharacterized protein from Treponema pallidum (strain Nichols).